Consider the following 103-residue polypeptide: Large ribosomal subunit protein bL21 (103 aa).

Belongs to the bacterial ribosomal protein bL21 family. In terms of assembly, part of the 50S ribosomal subunit. Contacts protein L20.

Functionally, this protein binds to 23S rRNA in the presence of protein L20. This is Large ribosomal subunit protein bL21 from Shewanella amazonensis (strain ATCC BAA-1098 / SB2B).